Consider the following 1483-residue polypeptide: Protein ORF C (1483 aa).

Disordered stretches follow at residues 135–268, 306–334, 383–506, 518–653, 680–911, 949–976, 1013–1061, and 1089–1299; these read LNDR…GRPP, VPYQ…LRPV, RRRA…FKRH, SIDD…DRNR, RQRR…TSVS, SSDD…RGGS, ALQQ…TDLI, and FSVA…QPSD. Residues 141-153 show a composition bias toward low complexity; sequence AAGSAQRGSAGSR. Residues 157–170 are compositionally biased toward polar residues; that stretch reads DNLTPTAADTTGAQ. Low complexity-rich tracts occupy residues 190 to 206 and 220 to 251; these read ASNV…RRQQ and ARQQ…TTAT. Residues 252–264 show a composition bias toward polar residues; the sequence is RQVFEQQGPSTIQ. Composition is skewed to low complexity over residues 424 to 449, 474 to 483, and 529 to 541; these read SGQS…TTGT, SNEPSRQSQS, and TMTQ…STTR. Over residues 596–607 the composition is skewed to polar residues; that stretch reads GSVTTTQPSGQL. Residues 609-621 show a composition bias toward basic and acidic residues; sequence SDDRGRPAPERRQ. A compositionally biased stretch (polar residues) spans 622–640; the sequence is QPTSRQTVAQTNIIPNTSG. Over residues 680 to 689 the composition is skewed to basic and acidic residues; sequence RQRRETEAEH. The span at 699–710 shows a compositional bias: polar residues; the sequence is TGVTPQRSNNPF. Basic and acidic residues predominate over residues 740-749; it reads SLREYRRRDP. Over residues 754–774 the composition is skewed to low complexity; the sequence is GRSYTDGSTTSDGDSSDNSWS. Over residues 841–876 the composition is skewed to polar residues; it reads NLKSPSPRTKLTRSSSLKSPGTTTRDTQQTSHPLTR. The segment covering 894 to 909 has biased composition (low complexity); that stretch reads DSGGSSDGNTGSSQTS. Composition is skewed to polar residues over residues 1096 to 1109 and 1116 to 1125; these read GSTS…SSIP and GPSTMTSQSV. A compositionally biased stretch (low complexity) spans 1148-1158; sequence SQSQPSSEQPA. The span at 1188-1202 shows a compositional bias: polar residues; the sequence is QPQSTVTNTQTQDVL. 2 stretches are compositionally biased toward low complexity: residues 1204-1226 and 1233-1251; these read SQGS…KTGS and KSAL…SGKS. The segment covering 1258–1276 has biased composition (polar residues); that stretch reads AASSTDPTTKPTRKVSINA. Over residues 1284 to 1299 the composition is skewed to low complexity; the sequence is KSSTKQSTKTSTQPSD. Positions 1408–1438 form a coiled coil; sequence AEQIRNLEVDELKILRQQVRERIANERQQQD. Positions 1454–1483 are disordered; that stretch reads DMLVSEESAAPTPLPMDTGRFTPKSDVDMS.

This is Protein ORF C from Elephantid herpesvirus 1 (isolate Asian elephant/Berlin/Kiba/1998) (EIHV-1).